An 887-amino-acid polypeptide reads, in one-letter code: Tubulin polyglutamylase TTLL7 (887 aa).

Residues 1–21 form a disordered region; the sequence is MPSLPQEGVIQGPSPLDLNTE. A TTL domain is found at 38-390; it reads KGTITANVAG…RTSDKRRNLA (353 aa). Residues K160, 166-167, 188-191, and 201-203 contribute to the ATP site; these read MG, QEYI, and KFD. R227 is an L-glutamate binding site. 249–250 contacts ATP; it reads TN. 3 residues coordinate L-glutamate: Y251, S252, and K271. The Mg(2+) site is built by D336, E349, and N351. K367 is a binding site for L-glutamate. A c-MTBD region region spans residues 388-450; that stretch reads NLAKQKAEAQ…ISREEHENRH (63 aa). 2 disordered regions span residues 519-621 and 651-676; these read MGKT…TRPF and LPHS…TKEQ. Over residues 548–560 the composition is skewed to low complexity; that stretch reads SSDSSYDSSSSSS. Polar residues-rich tracts occupy residues 593–621 and 656–670; these read QQPS…TRPF and DACS…SLRQ.

This sequence belongs to the tubulin--tyrosine ligase family. Interacts with both alpha- and beta-tubulin (via C-terminal tubulin tails). Mg(2+) serves as cofactor. In terms of tissue distribution, highly expressed in the nervous system including spinal cord, thalamus, hippocampus, hypothalamus and cerebellum.

The protein resides in the cell projection. It localises to the cilium. Its subcellular location is the cytoplasm. It is found in the cytoskeleton. The protein localises to the cilium basal body. The protein resides in the dendrite. It localises to the perikaryon. The enzyme catalyses L-glutamyl-[protein] + L-glutamate + ATP = gamma-L-glutamyl-L-glutamyl-[protein] + ADP + phosphate + H(+). It carries out the reaction (L-glutamyl)(n)-gamma-L-glutamyl-L-glutamyl-[protein] + L-glutamate + ATP = (L-glutamyl)(n+1)-gamma-L-glutamyl-L-glutamyl-[protein] + ADP + phosphate + H(+). In terms of biological role, polyglutamylase which modifies tubulin, generating polyglutamate side chains of variable lengths on the gamma-carboxyl group of specific glutamate residues within the C-terminal tail of tubulin. Mediates both ATP-dependent initiation and elongation steps of the polyglutamylation reaction. Preferentially modifies the beta-tubulin tail over an alpha-tail. Competes with monoglycylase TTLL3 for modification site on beta-tubulin substrate, thereby creating an anticorrelation between glycylation and glutamylation reactions. Required for neurite growth; responsible for the strong increase in tubulin polyglutamylation during postnatal neuronal maturation. This is Tubulin polyglutamylase TTLL7 from Homo sapiens (Human).